Consider the following 340-residue polypeptide: N-acetyl-gamma-glutamyl-phosphate reductase (340 aa).

C146 is an active-site residue.

The protein belongs to the NAGSA dehydrogenase family. Type 1 subfamily.

The protein resides in the cytoplasm. It carries out the reaction N-acetyl-L-glutamate 5-semialdehyde + phosphate + NADP(+) = N-acetyl-L-glutamyl 5-phosphate + NADPH + H(+). The protein operates within amino-acid biosynthesis; L-arginine biosynthesis; N(2)-acetyl-L-ornithine from L-glutamate: step 3/4. In terms of biological role, catalyzes the NADPH-dependent reduction of N-acetyl-5-glutamyl phosphate to yield N-acetyl-L-glutamate 5-semialdehyde. The sequence is that of N-acetyl-gamma-glutamyl-phosphate reductase from Rubrobacter xylanophilus (strain DSM 9941 / JCM 11954 / NBRC 16129 / PRD-1).